The following is a 429-amino-acid chain: 3-phosphoshikimate 1-carboxyvinyltransferase (429 aa).

3-phosphoshikimate is bound by residues Lys20, Ser21, and Arg25. Lys20 lines the phosphoenolpyruvate pocket. Phosphoenolpyruvate is bound by residues Gly89 and Arg118. The 3-phosphoshikimate site is built by Ser164, Ser165, Gln166, Ser192, Asp311, and Lys338. Residue Gln166 coordinates phosphoenolpyruvate. Catalysis depends on Asp311, which acts as the Proton acceptor. 2 residues coordinate phosphoenolpyruvate: Arg342 and Arg384.

Belongs to the EPSP synthase family. Monomer.

It is found in the cytoplasm. It catalyses the reaction 3-phosphoshikimate + phosphoenolpyruvate = 5-O-(1-carboxyvinyl)-3-phosphoshikimate + phosphate. Its pathway is metabolic intermediate biosynthesis; chorismate biosynthesis. Functionally, catalyzes the transfer of the enolpyruvyl moiety of phosphoenolpyruvate (PEP) to the 5-hydroxyl of shikimate-3-phosphate (S3P) to produce enolpyruvyl shikimate-3-phosphate and inorganic phosphate. The sequence is that of 3-phosphoshikimate 1-carboxyvinyltransferase from Methanococcus maripaludis (strain C7 / ATCC BAA-1331).